An 86-amino-acid polypeptide reads, in one-letter code: Large ribosomal subunit protein uL30m (86 aa).

Positions 67-86 (QQRELRKSNPGFIVEKRTID) are disordered.

Belongs to the universal ribosomal protein uL30 family. In terms of assembly, component of the mitochondrial large ribosomal subunit (mt-LSU). Mature yeast 74S mitochondrial ribosomes consist of a small (37S) and a large (54S) subunit. The 37S small subunit contains a 15S ribosomal RNA (15S mt-rRNA) and 34 different proteins. The 54S large subunit contains a 21S rRNA (21S mt-rRNA) and 46 different proteins.

Its subcellular location is the mitochondrion. Its function is as follows. Component of the mitochondrial ribosome (mitoribosome), a dedicated translation machinery responsible for the synthesis of mitochondrial genome-encoded proteins, including at least some of the essential transmembrane subunits of the mitochondrial respiratory chain. The mitoribosomes are attached to the mitochondrial inner membrane and translation products are cotranslationally integrated into the membrane. This Saccharomyces cerevisiae (strain ATCC 204508 / S288c) (Baker's yeast) protein is Large ribosomal subunit protein uL30m (MRPL33).